The chain runs to 1088 residues: DNA ligase 4 (1088 aa).

2 disordered regions span residues 1–56 (MALS…KFND) and 73–117 (TTTT…TTTT). Composition is skewed to low complexity over residues 25–53 (DFKNQQQINTSKTTNNNNNINNKNNYNNK) and 73–90 (TTTTTTKNTSTNSNINKT). A compositionally biased stretch (acidic residues) spans 95-105 (DDIFDDEDEDS). The ATP site is built by E414, K416, R421, E467, F514, E574, K579, K596, and K598. The active-site N6-AMP-lysine intermediate is the K416. Residue E467 coordinates Mg(2+). Position 574 (E574) interacts with Mg(2+). 2 BRCT domains span residues 827 to 917 (PTQN…PKYM) and 984 to 1088 (CWWS…EILD).

It belongs to the ATP-dependent DNA ligase family. It depends on Mg(2+) as a cofactor.

It localises to the nucleus. It carries out the reaction ATP + (deoxyribonucleotide)n-3'-hydroxyl + 5'-phospho-(deoxyribonucleotide)m = (deoxyribonucleotide)n+m + AMP + diphosphate.. Functionally, DNA ligase involved in DNA non-homologous end joining (NHEJ); required for double-strand break (DSB) repair. The sequence is that of DNA ligase 4 (lig4) from Dictyostelium discoideum (Social amoeba).